We begin with the raw amino-acid sequence, 275 residues long: Putative ribonuclease-like protein YfkH (275 aa).

6 helical membrane-spanning segments follow: residues 23–43, 83–103, 126–146, 172–192, 199–219, and 235–255; these read LAYFFLLSLFPFLIFMLTLTA, LLSFGIIAALWSASNGMNAIV, IFLTIAMVFTILVALLLPVFG, WGVSPLVLLIVFSALYVIAPN, FVMPGAVFATIGWIIVSTLFS, and IGGIIVLMIWFYLSGILIILG.

It localises to the cell membrane. The protein is Putative ribonuclease-like protein YfkH (yfkH) of Bacillus subtilis (strain 168).